The sequence spans 468 residues: Glutamate--tRNA ligase (468 aa).

The 'HIGH' region signature appears at 9-19; it reads PSPTGSIHIGN. The 'KMSKS' region signature appears at 239 to 243; the sequence is KLSKR. Residue Lys-242 coordinates ATP.

The protein belongs to the class-I aminoacyl-tRNA synthetase family. Glutamate--tRNA ligase type 1 subfamily. Monomer.

Its subcellular location is the cytoplasm. It carries out the reaction tRNA(Glu) + L-glutamate + ATP = L-glutamyl-tRNA(Glu) + AMP + diphosphate. In terms of biological role, catalyzes the attachment of glutamate to tRNA(Glu) in a two-step reaction: glutamate is first activated by ATP to form Glu-AMP and then transferred to the acceptor end of tRNA(Glu). This Blochmanniella pennsylvanica (strain BPEN) protein is Glutamate--tRNA ligase.